Reading from the N-terminus, the 945-residue chain is Isoleucine--tRNA ligase (945 aa).

A 'HIGH' region motif is present at residues 66 to 76 (PYANGDIHLGH). Glu-581 contacts L-isoleucyl-5'-AMP. The 'KMSKS' region motif lies at 622-626 (KMSKS). Lys-625 lines the ATP pocket. 4 residues coordinate Zn(2+): Cys-908, Cys-911, Cys-928, and Cys-931.

This sequence belongs to the class-I aminoacyl-tRNA synthetase family. IleS type 1 subfamily. Monomer. Zn(2+) is required as a cofactor.

It localises to the cytoplasm. The enzyme catalyses tRNA(Ile) + L-isoleucine + ATP = L-isoleucyl-tRNA(Ile) + AMP + diphosphate. Its function is as follows. Catalyzes the attachment of isoleucine to tRNA(Ile). As IleRS can inadvertently accommodate and process structurally similar amino acids such as valine, to avoid such errors it has two additional distinct tRNA(Ile)-dependent editing activities. One activity is designated as 'pretransfer' editing and involves the hydrolysis of activated Val-AMP. The other activity is designated 'posttransfer' editing and involves deacylation of mischarged Val-tRNA(Ile). The protein is Isoleucine--tRNA ligase of Burkholderia ambifaria (strain MC40-6).